The chain runs to 252 residues: 3-dehydroquinate dehydratase (252 aa).

Residues Ser21, 46–48 (EWR), and Arg82 contribute to the 3-dehydroquinate site. His143 (proton donor/acceptor) is an active-site residue. Lys170 functions as the Schiff-base intermediate with substrate in the catalytic mechanism. 3 residues coordinate 3-dehydroquinate: Arg213, Ser232, and Gln236.

The protein belongs to the type-I 3-dehydroquinase family. Homodimer.

It catalyses the reaction 3-dehydroquinate = 3-dehydroshikimate + H2O. Its pathway is metabolic intermediate biosynthesis; chorismate biosynthesis; chorismate from D-erythrose 4-phosphate and phosphoenolpyruvate: step 3/7. Functionally, involved in the third step of the chorismate pathway, which leads to the biosynthesis of aromatic amino acids. Catalyzes the cis-dehydration of 3-dehydroquinate (DHQ) and introduces the first double bond of the aromatic ring to yield 3-dehydroshikimate. The sequence is that of 3-dehydroquinate dehydratase from Escherichia coli O127:H6 (strain E2348/69 / EPEC).